Reading from the N-terminus, the 112-residue chain is Protein BEX5 (112 aa).

Composition is skewed to basic and acidic residues over residues 1–12 (MEKDPKERREEE) and 30–51 (PKPR…REDM). Residues 1 to 56 (MEKDPKERREEEQAPVQNEEACPMGGGEGPKPRENVRGDWDPPAQDFREDMPNGLV) form a disordered region. The segment at 101–105 (HHDHH) is his cluster. Cys-109 is a Zn(2+) binding site.

The protein belongs to the BEX family. Ubiquitinated. Degraded by the proteasome.

It localises to the cytoplasm. This is Protein BEX5 (BEX5) from Bos taurus (Bovine).